Consider the following 472-residue polypeptide: WAS protein family homolog DDB_G0292878 (472 aa).

The interval 279–472 (LPTYDNSNSG…ESDTDSSEWE (194 aa)) is disordered. A compositionally biased stretch (polar residues) spans 282–299 (YDNSNSGSAPVNQSSGGD). Residues 300 to 314 (NNVNNNNNNNNSNNS) show a composition bias toward low complexity. Residues 320–356 (PPQPTNAPPPPPPPPQSANAPPPPPPPPVSAPPPFNP) show a composition bias toward pro residues. The span at 363 to 373 (NDDDDDDDDDN) shows a compositional bias: acidic residues. Residues 374–383 (GGGGGPGGAI) are compositionally biased toward gly residues. The WH2 domain maps to 382 to 401 (AIGDLLADIRRGHKNRLKKA). Acidic residues predominate over residues 457–472 (TDDQDGESDTDSSEWE).

Belongs to the WASH1 family.

Its function is as follows. Acts as a nucleation-promoting factor by activating the Arp2/3 complex to induce actin polymerization. The polypeptide is WAS protein family homolog DDB_G0292878 (Dictyostelium discoideum (Social amoeba)).